We begin with the raw amino-acid sequence, 441 residues long: GTPase Der (441 aa).

EngA-type G domains are found at residues 4–169 (SIVA…PPEA) and 178–353 (PRIA…QNRN). GTP-binding positions include 10–17 (GRPNVGKS), 57–61 (DTGGI), 120–123 (NKVD), 184–191 (GKPNVGKS), 231–235 (DTAGL), and 296–299 (NKWD). The 85-residue stretch at 354–438 (LRISTGVLNE…SLKFFIRERK (85 aa)) folds into the KH-like domain.

This sequence belongs to the TRAFAC class TrmE-Era-EngA-EngB-Septin-like GTPase superfamily. EngA (Der) GTPase family. In terms of assembly, associates with the 50S ribosomal subunit.

Functionally, GTPase that plays an essential role in the late steps of ribosome biogenesis. This chain is GTPase Der, found in Lachnoclostridium phytofermentans (strain ATCC 700394 / DSM 18823 / ISDg) (Clostridium phytofermentans).